The sequence spans 176 residues: Probable DNA-directed RNA polymerase subunit delta (176 aa).

Residues 14–81 (KSFIDMAYTL…GENLWGLRDW (68 aa)) enclose the HTH HARE-type domain. Residues 114–176 (LGEDEMDDDD…DFEDEEDFKA (63 aa)) are disordered. Acidic residues-rich tracts occupy residues 116 to 145 (EDEM…QVEE) and 153 to 176 (VIEE…DFKA).

This sequence belongs to the RpoE family. As to quaternary structure, RNAP is composed of a core of 2 alpha, a beta and a beta' subunits. The core is associated with a delta subunit and one of several sigma factors.

Functionally, participates in both the initiation and recycling phases of transcription. In the presence of the delta subunit, RNAP displays an increased specificity of transcription, a decreased affinity for nucleic acids, and an increased efficiency of RNA synthesis because of enhanced recycling. This is Probable DNA-directed RNA polymerase subunit delta from Staphylococcus aureus (strain bovine RF122 / ET3-1).